The chain runs to 335 residues: Legumin type B (335 aa).

Disordered regions lie at residues 47–87 and 102–155; these read PETQ…GNSV and TEED…GRNG. Residues 105-118 show a composition bias toward basic and acidic residues; that stretch reads DTAKRLRSPRDKRN. The span at 135 to 144 shows a compositional bias: acidic residues; sequence QQEEEEQEEE. One can recognise a Cupin type-1 domain in the interval 167–314; sequence ENIAQPARAD…AFGLRQRQVT (148 aa).

This sequence belongs to the 11S seed storage protein (globulins) family. Hexamer; each subunit is composed of an acidic and a basic chain derived from a single precursor and linked by a disulfide bond.

In terms of biological role, this protein found in the seeds of many leguminous and non-leguminous plants is the source of sulfur-containing amino acids in seed meals. This chain is Legumin type B (LEB7), found in Vicia faba (Broad bean).